We begin with the raw amino-acid sequence, 101 residues long: Acylphosphatase (101 aa).

The 87-residue stretch at 12 to 98 folds into the Acylphosphatase-like domain; the sequence is RAHVFVTGRV…EGLRGFEVKR (87 aa). Active-site residues include Arg27 and Asn45.

It belongs to the acylphosphatase family.

The enzyme catalyses an acyl phosphate + H2O = a carboxylate + phosphate + H(+). In Nostoc sp. (strain PCC 7120 / SAG 25.82 / UTEX 2576), this protein is Acylphosphatase (acyP).